Reading from the N-terminus, the 671-residue chain is DNA ligase (671 aa).

NAD(+)-binding positions include 32-36, 81-82, and E113; these read DAEYD and SL. Catalysis depends on K115, which acts as the N6-AMP-lysine intermediate. Residues R136, E173, K290, and K314 each contribute to the NAD(+) site. Zn(2+) contacts are provided by C408, C411, C426, and C432. The BRCT domain occupies 593-671; sequence EIDSPFAGKT…ETEMLRLLGS (79 aa).

The protein belongs to the NAD-dependent DNA ligase family. LigA subfamily. It depends on Mg(2+) as a cofactor. The cofactor is Mn(2+).

The catalysed reaction is NAD(+) + (deoxyribonucleotide)n-3'-hydroxyl + 5'-phospho-(deoxyribonucleotide)m = (deoxyribonucleotide)n+m + AMP + beta-nicotinamide D-nucleotide.. Functionally, DNA ligase that catalyzes the formation of phosphodiester linkages between 5'-phosphoryl and 3'-hydroxyl groups in double-stranded DNA using NAD as a coenzyme and as the energy source for the reaction. It is essential for DNA replication and repair of damaged DNA. This is DNA ligase from Escherichia coli O1:K1 / APEC.